The following is a 30-amino-acid chain: Photosystem I reaction center subunit XII (30 aa).

Residues 7 to 29 (IYTVLCIALLAGILAIRLGSTLY) form a helical membrane-spanning segment.

This sequence belongs to the PsaM family.

The protein localises to the plastid. It is found in the chloroplast thylakoid membrane. The polypeptide is Photosystem I reaction center subunit XII (Phaeodactylum tricornutum (strain CCAP 1055/1)).